A 217-amino-acid polypeptide reads, in one-letter code: UPF0193 protein EVG1 (217 aa).

It belongs to the UPF0193 (EVG1) family.

This chain is UPF0193 protein EVG1 (C22orf23), found in Homo sapiens (Human).